The sequence spans 842 residues: MSVKPETETGTAQTAAAEAPEEGVYSFAAMEAKWPQVWEDLKVFTPADDGSRERRYVLDMFPYPSGDLHMGHAEAFAMGDVVARYLRQKGFDVLHPIGWDSFGLPAENAAIKRNAHPSEWTYANIDTQAASFKRYAISADWSRRLHTSDPEYYRWTQWLFKRFYERGLAYRKDSPVNWCPKDLTVLANEQVVNGACERCGTPVTKKSLNQWYFKITDYADRLLEDMDQLQGHWPERVLAMQRNWIGRSEGAHVRFVIEATADRAEREVTVFTTRPDTLYGATFFVVAADAHLALDLVTPEQHDELMAYREKVKALSEIERQSTEREKTGVFTGRYAINPLNGEKLPVWAADYVLADYGTGAIMAVPAHDQRDLDFAKTFGLPVRAVLDTGDEDPAETGVATAGEGTLKNSGELDGLSKSEGIPAAIEILEKLGTGEKFVNFRLRDWLLSRQRFWGTPIPIIHCGECGEVPVPDDQLPVRLPDDLRGEALSPKGTSPLAAAVEWVNVECPNCGRAAQRDTDTMDTFVDSSWYFLRFVSPDYTEGPFDPEKINNWMPVGQYVGGVEHAILHLLYARFFTKVIKDIGLIEANEPFSALLNQGQVLNGGKAMSKSLGNGVDLGEQLDKFGVDAVRLTMVFASPPEDDVDWADVSPSGSAKFLARAWRLGQDVSSEPGVDPATGDRALRTVTHKTIADAAELLDNNKFNVVVARLMELVNATRKTIDSGAGAADPAVREAVEAVAVILSLFAPYTAEDLWNTLGHPASVANAGWPKHDDALLVQDTVTAVVQVQGKVRDRLEVSPDITEDALRELALASENVQRALDGRGIRTVIVRAPKLVNIVPA.

A 'HIGH' region motif is present at residues 62–72 (PYPSGDLHMGH). The segment at 390 to 414 (GDEDPAETGVATAGEGTLKNSGELD) is disordered. A 'KMSKS' region motif is present at residues 607–611 (AMSKS). Lysine 610 is an ATP binding site.

Belongs to the class-I aminoacyl-tRNA synthetase family.

The protein localises to the cytoplasm. It carries out the reaction tRNA(Leu) + L-leucine + ATP = L-leucyl-tRNA(Leu) + AMP + diphosphate. The protein is Leucine--tRNA ligase of Paenarthrobacter aurescens (strain TC1).